A 119-amino-acid chain; its full sequence is Acidic phospholipase A2 DE-III (119 aa).

7 disulfide bridges follow: C11–C72, C26–C118, C28–C44, C43–C99, C50–C92, C60–C85, and C79–C90. Positions 27, 29, and 31 each coordinate Ca(2+). Residue H47 is part of the active site. D48 contacts Ca(2+). The active site involves D93.

Belongs to the phospholipase A2 family. Group I subfamily. D49 sub-subfamily. Ca(2+) is required as a cofactor. As to expression, expressed by the venom gland.

It is found in the secreted. The catalysed reaction is a 1,2-diacyl-sn-glycero-3-phosphocholine + H2O = a 1-acyl-sn-glycero-3-phosphocholine + a fatty acid + H(+). PLA2 catalyzes the calcium-dependent hydrolysis of the 2-acyl groups in 3-sn-phosphoglycerides. This chain is Acidic phospholipase A2 DE-III, found in Naja melanoleuca (Forest cobra).